The following is a 327-amino-acid chain: Solute-binding protein SPO1773 (327 aa).

Residues 1–26 (MTISFKGLARGVACAALVLAALPAAA) form the signal peptide. 3-hydroxybenzoate contacts are provided by residues 39–41 (HTW), R150, 170–172 (RIT), and D211.

Belongs to the bacterial solute-binding protein 7 family. As to quaternary structure, the complex is comprised of an extracytoplasmic solute-binding protein and a heteromeric permease formed by two transmembrane proteins.

The protein resides in the periplasm. In terms of biological role, solute-binding protein that binds 3,4-dihydroxybenzoate and 3-hydroxybenzoate (in vitro). Probably part of a tripartite ATP-independent periplasmic (TRAP) transport system that mediates solute transport into the cytoplasm. The polypeptide is Solute-binding protein SPO1773 (Ruegeria pomeroyi (strain ATCC 700808 / DSM 15171 / DSS-3) (Silicibacter pomeroyi)).